We begin with the raw amino-acid sequence, 240 residues long: Glycerol uptake facilitator protein 3 (240 aa).

2 consecutive transmembrane segments (helical) span residues 11 to 31 and 41 to 61; these read LGEF…VAGV and AGWV…VYAS. An NPA 1 motif is present at residues 70–72; that stretch reads NPA. 3 consecutive transmembrane segments (helical) span residues 88 to 108, 137 to 157, and 162 to 182; these read VIPY…VVWL, FWNF…LLAF, and FTAG…GLSL. The short motif at 191 to 193 is the NPA 2 element; that stretch reads NPA. Residues 219-239 form a helical membrane-spanning segment; sequence WVPIAGPLVGGALGALLFNVL.

The protein belongs to the MIP/aquaporin (TC 1.A.8) family.

Its subcellular location is the cell membrane. In terms of biological role, transporter that facilitates the transmembrane diffusion of water, dihydroxyacetone, glycerol and H(2)O(2). Is not permeable to urea and D/L-lactic acid. The polypeptide is Glycerol uptake facilitator protein 3 (Lactiplantibacillus plantarum (strain ATCC BAA-793 / NCIMB 8826 / WCFS1) (Lactobacillus plantarum)).